Here is a 329-residue protein sequence, read N- to C-terminus: N-acetylmuramoyl-L-alanine amidase sle1 (329 aa).

An N-terminal signal peptide occupies residues 1–26 (MNKKILATAVLGTGALSTLFAHQAEA). LysM domains follow at residues 28-71 (TTHT…VLKV), 88-131 (STYT…QLKV), and 152-195 (STYT…KLRV). One can recognise a Peptidase C51 domain in the interval 205 to 329 (STRSAQSTYY…YQVRNYKFIH (125 aa)).

Its subcellular location is the secreted. The protein resides in the cell surface. It catalyses the reaction Hydrolyzes the link between N-acetylmuramoyl residues and L-amino acid residues in certain cell-wall glycopeptides.. Its function is as follows. Peptidoglycan hydrolase involved in the splitting of the septum during cell division. In Staphylococcus haemolyticus (strain JCSC1435), this protein is N-acetylmuramoyl-L-alanine amidase sle1 (sle1).